The sequence spans 301 residues: 4-diphosphocytidyl-2-C-methyl-D-erythritol kinase (301 aa).

Lysine 18 is a catalytic residue. 103 to 113 contacts ATP; it reads PVAAGIGGGSA. Aspartate 145 is a catalytic residue.

Belongs to the GHMP kinase family. IspE subfamily.

It catalyses the reaction 4-CDP-2-C-methyl-D-erythritol + ATP = 4-CDP-2-C-methyl-D-erythritol 2-phosphate + ADP + H(+). It functions in the pathway isoprenoid biosynthesis; isopentenyl diphosphate biosynthesis via DXP pathway; isopentenyl diphosphate from 1-deoxy-D-xylulose 5-phosphate: step 3/6. Its function is as follows. Catalyzes the phosphorylation of the position 2 hydroxy group of 4-diphosphocytidyl-2C-methyl-D-erythritol. The sequence is that of 4-diphosphocytidyl-2-C-methyl-D-erythritol kinase from Bradyrhizobium sp. (strain BTAi1 / ATCC BAA-1182).